We begin with the raw amino-acid sequence, 86 residues long: RNA-binding protein Hfq (86 aa).

A Sm domain is found at 9–68; the sequence is DPFLNALRRERIPVSIYLVNGIKLQGQIESFDQFVILLKNTVNQMVYKHAISTVVPARPV. The segment at 65–86 is disordered; it reads ARPVSHHSGERGSDRPSEKSED. The segment covering 71-86 has biased composition (basic and acidic residues); the sequence is HSGERGSDRPSEKSED.

Belongs to the Hfq family. In terms of assembly, homohexamer.

Its function is as follows. RNA chaperone that binds small regulatory RNA (sRNAs) and mRNAs to facilitate mRNA translational regulation in response to envelope stress, environmental stress and changes in metabolite concentrations. Also binds with high specificity to tRNAs. The polypeptide is RNA-binding protein Hfq (Vibrio vulnificus (strain YJ016)).